A 1861-amino-acid chain; its full sequence is Amylopullulanase (1861 aa).

The N-terminal stretch at 1–35 is a signal peptide; it reads MNKKLFTNRFISFNMSLLLVLTAVFSSIPLHSVHA. Ca(2+) is bound by residues D248, N250, D288, D343, N401, D403, N406, D407, and D453. 2 residues coordinate substrate: H526 and R626. D628 acts as the Nucleophile in catalysis. E657 (proton donor) is an active-site residue. Substrate-binding positions include 733–734, D793, and R797; that span reads HD. Fibronectin type-III domains follow at residues 929–1021 and 1158–1252; these read APQA…AYPI and KPTA…VVPI. The CBM20 domain occupies 1246 to 1354; the sequence is KPDVVPIKVI…INDTVYRWRD (109 aa). Residues 1448 to 1486 are disordered; that stretch reads QENNSGSGTGNNNTSTSGSNSSSTGSGSTGSTSITSNIS. Low complexity predominate over residues 1450–1486; it reads NNSGSGTGNNNTSTSGSNSSSTGSGSTGSTSITSNIS. 3 SLH domains span residues 1677-1740, 1741-1799, and 1802-1861; these read EYDK…YSGE, FSDV…KEEN, and ATTF…SGNI.

The protein belongs to the glycosyl hydrolase 13 family. Requires Ca(2+) as cofactor. Glycosylated.

The protein resides in the secreted. It localises to the cell wall. The catalysed reaction is Endohydrolysis of (1-&gt;4)-alpha-D-glucosidic linkages in polysaccharides containing three or more (1-&gt;4)-alpha-linked D-glucose units.. It carries out the reaction Hydrolysis of (1-&gt;6)-alpha-D-glucosidic linkages in pullulan, amylopectin and glycogen, and in the alpha- and beta-limit dextrins of amylopectin and glycogen.. The chain is Amylopullulanase (amyB) from Thermoanaerobacterium thermosulfurigenes (Clostridium thermosulfurogenes).